The primary structure comprises 267 residues: Hydroxyethylthiazole kinase (267 aa).

Methionine 46 contacts substrate. ATP is bound by residues arginine 122 and serine 168. Glycine 195 provides a ligand contact to substrate.

It belongs to the Thz kinase family. Requires Mg(2+) as cofactor.

The catalysed reaction is 5-(2-hydroxyethyl)-4-methylthiazole + ATP = 4-methyl-5-(2-phosphooxyethyl)-thiazole + ADP + H(+). Its pathway is cofactor biosynthesis; thiamine diphosphate biosynthesis; 4-methyl-5-(2-phosphoethyl)-thiazole from 5-(2-hydroxyethyl)-4-methylthiazole: step 1/1. Catalyzes the phosphorylation of the hydroxyl group of 4-methyl-5-beta-hydroxyethylthiazole (THZ). In Nitratidesulfovibrio vulgaris (strain DP4) (Desulfovibrio vulgaris), this protein is Hydroxyethylthiazole kinase.